The primary structure comprises 265 residues: Hydroxyacylglutathione hydrolase (265 aa).

Zn(2+) contacts are provided by H53, H55, D57, H58, H109, D126, and H164.

It belongs to the metallo-beta-lactamase superfamily. Glyoxalase II family. Monomer. Zn(2+) is required as a cofactor.

It catalyses the reaction an S-(2-hydroxyacyl)glutathione + H2O = a 2-hydroxy carboxylate + glutathione + H(+). The protein operates within secondary metabolite metabolism; methylglyoxal degradation; (R)-lactate from methylglyoxal: step 2/2. Its function is as follows. Thiolesterase that catalyzes the hydrolysis of S-D-lactoyl-glutathione to form glutathione and D-lactic acid. In Dechloromonas aromatica (strain RCB), this protein is Hydroxyacylglutathione hydrolase.